The chain runs to 86 residues: Large ribosomal subunit protein bL27 (86 aa).

Positions 1–21 (MAHKKGASSSRNGRDSAAQRL) are disordered.

This sequence belongs to the bacterial ribosomal protein bL27 family.

This is Large ribosomal subunit protein bL27 (rpmA) from Mycobacterium tuberculosis (strain CDC 1551 / Oshkosh).